A 510-amino-acid chain; its full sequence is Bifunctional pantoate ligase/cytidylate kinase (510 aa).

Residues 1–276 are pantoate--beta-alanine ligase; sequence MKKVIIRKTE…CGETRLIDHV (276 aa). Residue 29–36 coordinates ATP; the sequence is MGNLHDGH. The Proton donor role is filled by His36. A (R)-pantoate-binding site is contributed by Gln61. Gln61 contacts beta-alanine. 150 to 153 contributes to the ATP binding site; sequence GEKD. Gln156 serves as a coordination point for (R)-pantoate. 187–190 serves as a coordination point for ATP; sequence LSSR. A cytidylate kinase region spans residues 277-510; that stretch reads FLMKRRPIIA…DRIPKETEIK (234 aa).

The protein in the N-terminal section; belongs to the pantothenate synthetase family. It in the C-terminal section; belongs to the cytidylate kinase family. Type 1 subfamily.

Its subcellular location is the cytoplasm. The enzyme catalyses (R)-pantoate + beta-alanine + ATP = (R)-pantothenate + AMP + diphosphate + H(+). It catalyses the reaction CMP + ATP = CDP + ADP. The catalysed reaction is dCMP + ATP = dCDP + ADP. The protein operates within cofactor biosynthesis; (R)-pantothenate biosynthesis; (R)-pantothenate from (R)-pantoate and beta-alanine: step 1/1. Its function is as follows. Catalyzes the condensation of pantoate with beta-alanine in an ATP-dependent reaction via a pantoyl-adenylate intermediate. Functionally, catalyzes the transfer of a phosphate group from ATP to either CMP or dCMP to form CDP or dCDP and ADP, respectively. The chain is Bifunctional pantoate ligase/cytidylate kinase from Prochlorococcus marinus (strain MIT 9301).